A 461-amino-acid chain; its full sequence is Bifunctional protein HldE (461 aa).

Residues 1 to 315 are ribokinase; that stretch reads MKKILVIGDL…LILNQTHPKI (315 aa). Residue 191–194 participates in ATP binding; that stretch reads NRTE. The active site involves Asp260. The tract at residues 332–461 is cytidylyltransferase; sequence FTNGCFDLLH…IEKIKRTCND (130 aa).

This sequence in the N-terminal section; belongs to the carbohydrate kinase PfkB family. The protein in the C-terminal section; belongs to the cytidylyltransferase family. As to quaternary structure, homodimer.

The enzyme catalyses D-glycero-beta-D-manno-heptose 7-phosphate + ATP = D-glycero-beta-D-manno-heptose 1,7-bisphosphate + ADP + H(+). It catalyses the reaction D-glycero-beta-D-manno-heptose 1-phosphate + ATP + H(+) = ADP-D-glycero-beta-D-manno-heptose + diphosphate. Its pathway is nucleotide-sugar biosynthesis; ADP-L-glycero-beta-D-manno-heptose biosynthesis; ADP-L-glycero-beta-D-manno-heptose from D-glycero-beta-D-manno-heptose 7-phosphate: step 1/4. It participates in nucleotide-sugar biosynthesis; ADP-L-glycero-beta-D-manno-heptose biosynthesis; ADP-L-glycero-beta-D-manno-heptose from D-glycero-beta-D-manno-heptose 7-phosphate: step 3/4. The protein operates within bacterial outer membrane biogenesis; LPS core biosynthesis. Catalyzes the phosphorylation of D-glycero-D-manno-heptose 7-phosphate at the C-1 position to selectively form D-glycero-beta-D-manno-heptose-1,7-bisphosphate. In terms of biological role, catalyzes the ADP transfer from ATP to D-glycero-beta-D-manno-heptose 1-phosphate, yielding ADP-D-glycero-beta-D-manno-heptose. The chain is Bifunctional protein HldE from Helicobacter pylori (strain ATCC 700392 / 26695) (Campylobacter pylori).